A 212-amino-acid polypeptide reads, in one-letter code: Large ribosomal subunit protein uL3 (212 aa).

Residues 134–154 (RKTHGNSVSHRVPGSIGQNQT) form a disordered region. Gln153 bears the N5-methylglutamine mark.

The protein belongs to the universal ribosomal protein uL3 family. Part of the 50S ribosomal subunit. Forms a cluster with proteins L14 and L19. Methylated by PrmB.

Its function is as follows. One of the primary rRNA binding proteins, it binds directly near the 3'-end of the 23S rRNA, where it nucleates assembly of the 50S subunit. The protein is Large ribosomal subunit protein uL3 of Dichelobacter nodosus (strain VCS1703A).